An 828-amino-acid polypeptide reads, in one-letter code: MKLSRRSFMKANAVAAAAAAAGLSVPGVARAVVGQQEAIKWDKAPCRFCGTGCGVLVGTQQGRVVACQGDPDAPVNRGLNCIKGYFLPKIMYGKDRLTQPMLRMKDGSYHKDGEFTPVSWEQAFDVMEEKFKTALKEKGPEAIGMFGSGQWTIWEGYAAAKLFKAGFRSNNIDPNARHCMASAVVGFMRTFGMDEPMGCYDDIEQADAFVLWGSNMAEMHPILWSRITNRRLSDPNVKVAVLSTFQHRSFELADNGIVFTPQSDLVILNYIANYIIQNNAVNQDFFTKHVNLRKGATDIGYGLRPTHPLEKAAKNPGSDASEPMSFDEYKAFVAEYTLDKTAEMTGVPKDQLEQLAQLYADPNKRVISYWTMGFNQHTRGVWANNLVYNLHLLTGKISQPGCGPFSLTGQPSACGTAREVGTFSHRLPADMVVTNEKHRDICEKHWQIPAGTIPAKVGLHAVAQDRALKDGKLNVYWVMCNNNMQAGPNINEDRMPGWRDPRNFIIVSDPYPTVSALSADLILPTAMWVEKEGAYGNAERRTQFWRQQIKAPGEAKSDLWQLVQFSRRFKTEEVWPEALLAQKPELRGKTLYDVLFATPAVSKFPLSELKEDQLNDESRELGFYLQKGLFEEYAWFGRGHGHDLAPFDDYHNARGLRWPVVEGKETQWRYSEGNDPYVKAGEGYKFYGKPDGKAVIFALPFEPAAESPDNEYDLWLSTGRVLEHWHTGSMTRRVPELHRAFPEAVVFIHPLDAKARDLRRGDKVKVSSRRGEVISIVETRGRNRPPQGLVYMPFFDAAQLVNNLTLDATDPLSKETDFKKCAVKLAKV.

Residues 1–31 (MKLSRRSFMKANAVAAAAAAAGLSVPGVARA) constitute a signal peptide (tat-type signal). The 57-residue stretch at 39–95 (IKWDKAPCRFCGTGCGVLVGTQQGRVVACQGDPDAPVNRGLNCIKGYFLPKIMYGKD) folds into the 4Fe-4S Mo/W bis-MGD-type domain. The [4Fe-4S] cluster site is built by cysteine 46, cysteine 49, cysteine 53, and cysteine 81. Residues lysine 83, glutamine 150, asparagine 175, cysteine 179, 212 to 219 (WGSNMAEM), 243 to 247 (STFQH), 262 to 264 (QSD), methionine 372, glutamine 376, asparagine 482, 508 to 509 (SD), lysine 531, aspartate 558, and 718 to 727 (TGRVLEHWHT) contribute to the Mo-bis(molybdopterin guanine dinucleotide) site. Phenylalanine 794 is a binding site for substrate. The Mo-bis(molybdopterin guanine dinucleotide) site is built by asparagine 802 and lysine 819.

Belongs to the prokaryotic molybdopterin-containing oxidoreductase family. NasA/NapA/NarB subfamily. Component of the periplasmic nitrate reductase NapAB complex composed of NapA and NapB. [4Fe-4S] cluster is required as a cofactor. The cofactor is Mo-bis(molybdopterin guanine dinucleotide). In terms of processing, predicted to be exported by the Tat system. The position of the signal peptide cleavage has not been experimentally proven.

It localises to the periplasm. The enzyme catalyses 2 Fe(II)-[cytochrome] + nitrate + 2 H(+) = 2 Fe(III)-[cytochrome] + nitrite + H2O. Its function is as follows. Catalytic subunit of the periplasmic nitrate reductase complex NapAB. Receives electrons from NapB and catalyzes the reduction of nitrate to nitrite. The protein is Periplasmic nitrate reductase of Salmonella paratyphi A (strain ATCC 9150 / SARB42).